We begin with the raw amino-acid sequence, 898 residues long: Nitrate reductase [NAD(P)H] (898 aa).

The segment covering 1 to 15 has biased composition (basic and acidic residues); that stretch reads MAASVENRRFTHHEP. Residues 1-65 are disordered; it reads MAASVENRRF…SSSEDENEND (65 aa). Position 180 (Cys-180) interacts with Mo-molybdopterin. Positions 528–603 constitute a Cytochrome b5 heme-binding domain; sequence SKMFSMSEVK…LEDYRIGELI (76 aa). Residues His-563 and His-586 each coordinate heme. In terms of domain architecture, FAD-binding FR-type spans 642-754; it reads GAKIPTKLVY…KGPLGHVEYT (113 aa). FAD is bound by residues 694–697, 711–715, Phe-716, Phe-723, 728–730, and Thr-781; these read RAYT, VVKIY, and LMS.

The protein belongs to the nitrate reductase family. As to quaternary structure, homodimer. It depends on FAD as a cofactor. Heme serves as cofactor. Requires Mo-molybdopterin as cofactor.

The catalysed reaction is nitrite + NAD(+) + H2O = nitrate + NADH + H(+). It catalyses the reaction nitrite + NADP(+) + H2O = nitrate + NADPH + H(+). Its function is as follows. Nitrate reductase is a key enzyme involved in the first step of nitrate assimilation in plants, fungi and bacteria. In Betula pendula (European white birch), this protein is Nitrate reductase [NAD(P)H] (NIA1).